A 512-amino-acid chain; its full sequence is Oxalate--CoA ligase (512 aa).

168 to 179 is an ATP binding site; the sequence is HTSGTTGRPKVV. Phosphoserine is present on residues S283 and S284. The FACS motif lies at 381-429; the sequence is DRFFRTGDEGKLDKDGYVFITGRIKELVNRGGEKISPAEIDAVLMQHPD. The short motif at 510–512 is the Microbody targeting signal element; it reads AKL.

The protein belongs to the ATP-dependent AMP-binding enzyme family.

The protein resides in the peroxisome matrix. It is found in the peroxisome membrane. The catalysed reaction is oxalate + ATP + CoA = oxalyl-CoA + AMP + diphosphate. Functionally, catalyzes the first step in a degradation pathway of oxalate to CO(2) to protect the cell against the harmful effects of oxalate derived from endogenous processes or an environmental sources. The chain is Oxalate--CoA ligase (pcs60) from Schizosaccharomyces pombe (strain 972 / ATCC 24843) (Fission yeast).